The sequence spans 204 residues: Translation initiation factor 2 subunit beta (204 aa).

The 59-residue stretch at alanine 146–leucine 204 folds into the TRAM domain.

It belongs to the eIF-2-beta/eIF-5 family. Heterotrimer composed of an alpha, a beta and a gamma chain.

Its function is as follows. eIF-2 functions in the early steps of protein synthesis by forming a ternary complex with GTP and initiator tRNA. This chain is Translation initiation factor 2 subunit beta, found in Methanocorpusculum labreanum (strain ATCC 43576 / DSM 4855 / Z).